Reading from the N-terminus, the 293-residue chain is MGLWAELCISLRGLSFFLVLMTGEGTRGGSFKESLGVCSKQTLLVPLRYNESYSQPVYKPYLTLCAGRRICSTYRTTYRVAWREVRREVPQTHVVCCQGWKKPHPGALTCDAICSKPCLNGGVCTGPDRCECAPGWGGKHCHVDVDECRASLTLCSHGCLNTLGSFLCSCPHPLVLGLDGRTCAGGPPESPTSASILSVAVREADSEEERALRWEVAELRGRLEKLEQWATQAGAWVRAVLPMPPEELRPEQVAELWGRGDRIESLSDQVLLLEERLGACACEDNSLGPSLRG.

The N-terminal stretch at methionine 1–glycine 28 is a signal peptide. In terms of domain architecture, EMI spans serine 34–alanine 112. Disulfide bonds link cysteine 38–cysteine 97, cysteine 65–cysteine 71, cysteine 96–cysteine 110, cysteine 114–cysteine 124, cysteine 118–cysteine 130, cysteine 132–cysteine 141, cysteine 148–cysteine 159, cysteine 155–cysteine 168, and cysteine 170–cysteine 183. Asparagine 50 carries an N-linked (GlcNAc...) asparagine glycan. In terms of domain architecture, EGF-like 1 spans aspartate 111–histidine 142. The EGF-like 2; calcium-binding domain maps to aspartate 144–alanine 184. A coiled-coil region spans residues serine 206–alanine 235.

Ubiquitously expressed in brain, kidney, thymus and lung.

Its subcellular location is the secreted. The protein is Epidermal growth factor-like protein 8 (Egfl8) of Mus musculus (Mouse).